An 833-amino-acid chain; its full sequence is Leucine--tRNA ligase (833 aa).

Positions 41–52 (PYPSGAGLHVGH) match the 'HIGH' region motif. Residues 610-614 (KMSKS) carry the 'KMSKS' region motif. An ATP-binding site is contributed by Lys613.

This sequence belongs to the class-I aminoacyl-tRNA synthetase family.

It is found in the cytoplasm. The catalysed reaction is tRNA(Leu) + L-leucine + ATP = L-leucyl-tRNA(Leu) + AMP + diphosphate. The polypeptide is Leucine--tRNA ligase (Streptococcus thermophilus (strain CNRZ 1066)).